The sequence spans 645 residues: Phosphomethylpyrimidine synthase (645 aa).

The segment covering 1 to 12 (MSHNTVIPTTDI) has biased composition (polar residues). The tract at residues 1–25 (MSHNTVIPTTDISPKPDPARPRKAQ) is disordered. Substrate contacts are provided by residues N253, M282, Y311, H347, 367-369 (SRG), 408-411 (DGLR), and E447. Position 451 (H451) interacts with Zn(2+). Y474 is a substrate binding site. Position 515 (H515) interacts with Zn(2+). C595, C598, and C603 together coordinate [4Fe-4S] cluster.

Belongs to the ThiC family. Homodimer. Requires [4Fe-4S] cluster as cofactor.

The enzyme catalyses 5-amino-1-(5-phospho-beta-D-ribosyl)imidazole + S-adenosyl-L-methionine = 4-amino-2-methyl-5-(phosphooxymethyl)pyrimidine + CO + 5'-deoxyadenosine + formate + L-methionine + 3 H(+). It participates in cofactor biosynthesis; thiamine diphosphate biosynthesis. Its function is as follows. Catalyzes the synthesis of the hydroxymethylpyrimidine phosphate (HMP-P) moiety of thiamine from aminoimidazole ribotide (AIR) in a radical S-adenosyl-L-methionine (SAM)-dependent reaction. The sequence is that of Phosphomethylpyrimidine synthase from Photorhabdus laumondii subsp. laumondii (strain DSM 15139 / CIP 105565 / TT01) (Photorhabdus luminescens subsp. laumondii).